Reading from the N-terminus, the 162-residue chain is Ubiquitin-fold modifier-conjugating enzyme 1 (162 aa).

Residue Cys115 is the Glycyl thioester intermediate of the active site.

The protein belongs to the ubiquitin-conjugating enzyme family. UFC1 subfamily. As to quaternary structure, interacts with uba-5.

E2-like enzyme which forms an intermediate with ufm-1. The intermediate is formed via a thioester linkage. This chain is Ubiquitin-fold modifier-conjugating enzyme 1, found in Caenorhabditis briggsae.